The sequence spans 289 residues: Acetyl-coenzyme A carboxylase carboxyl transferase subunit beta (289 aa).

One can recognise a CoA carboxyltransferase N-terminal domain in the interval 24–289 (LWTNCESCGQ…RQKTVSDAAA (266 aa)). Zn(2+)-binding residues include Cys28, Cys31, Cys47, and Cys50. The segment at 28 to 50 (CESCGQMMLTKELERSEKVCPHC) adopts a C4-type zinc-finger fold.

It belongs to the AccD/PCCB family. Acetyl-CoA carboxylase is a heterohexamer composed of biotin carboxyl carrier protein (AccB), biotin carboxylase (AccC) and two subunits each of ACCase subunit alpha (AccA) and ACCase subunit beta (AccD). The cofactor is Zn(2+).

It localises to the cytoplasm. The catalysed reaction is N(6)-carboxybiotinyl-L-lysyl-[protein] + acetyl-CoA = N(6)-biotinyl-L-lysyl-[protein] + malonyl-CoA. It functions in the pathway lipid metabolism; malonyl-CoA biosynthesis; malonyl-CoA from acetyl-CoA: step 1/1. Its function is as follows. Component of the acetyl coenzyme A carboxylase (ACC) complex. Biotin carboxylase (BC) catalyzes the carboxylation of biotin on its carrier protein (BCCP) and then the CO(2) group is transferred by the transcarboxylase to acetyl-CoA to form malonyl-CoA. The chain is Acetyl-coenzyme A carboxylase carboxyl transferase subunit beta from Gluconobacter oxydans (strain 621H) (Gluconobacter suboxydans).